The primary structure comprises 433 residues: Serine--tRNA ligase (433 aa).

Position 235–237 (235–237) interacts with L-serine; sequence TSE. An ATP-binding site is contributed by 266 to 268; sequence RSE. Glu-289 serves as a coordination point for L-serine. 353–356 lines the ATP pocket; it reads EISS. An L-serine-binding site is contributed by Ser-388.

This sequence belongs to the class-II aminoacyl-tRNA synthetase family. Type-1 seryl-tRNA synthetase subfamily. Homodimer. The tRNA molecule binds across the dimer.

The protein resides in the cytoplasm. The enzyme catalyses tRNA(Ser) + L-serine + ATP = L-seryl-tRNA(Ser) + AMP + diphosphate + H(+). It carries out the reaction tRNA(Sec) + L-serine + ATP = L-seryl-tRNA(Sec) + AMP + diphosphate + H(+). The protein operates within aminoacyl-tRNA biosynthesis; selenocysteinyl-tRNA(Sec) biosynthesis; L-seryl-tRNA(Sec) from L-serine and tRNA(Sec): step 1/1. Catalyzes the attachment of serine to tRNA(Ser). Is also able to aminoacylate tRNA(Sec) with serine, to form the misacylated tRNA L-seryl-tRNA(Sec), which will be further converted into selenocysteinyl-tRNA(Sec). This Burkholderia pseudomallei (strain 1106a) protein is Serine--tRNA ligase.